Consider the following 348-residue polypeptide: Anthranilate phosphoribosyltransferase (348 aa).

5-phospho-alpha-D-ribose 1-diphosphate contacts are provided by residues glycine 87, 90–91 (GD), threonine 95, 97–100 (NIST), 115–123 (KHGNRSASG), and serine 127. Position 87 (glycine 87) interacts with anthranilate. Serine 99 is a binding site for Mg(2+). Asparagine 118 contacts anthranilate. Arginine 173 serves as a coordination point for anthranilate. The Mg(2+) site is built by aspartate 232 and glutamate 233.

It belongs to the anthranilate phosphoribosyltransferase family. In terms of assembly, homodimer. Requires Mg(2+) as cofactor.

It carries out the reaction N-(5-phospho-beta-D-ribosyl)anthranilate + diphosphate = 5-phospho-alpha-D-ribose 1-diphosphate + anthranilate. The protein operates within amino-acid biosynthesis; L-tryptophan biosynthesis; L-tryptophan from chorismate: step 2/5. Functionally, catalyzes the transfer of the phosphoribosyl group of 5-phosphorylribose-1-pyrophosphate (PRPP) to anthranilate to yield N-(5'-phosphoribosyl)-anthranilate (PRA). This is Anthranilate phosphoribosyltransferase from Synechococcus sp. (strain WH7803).